The primary structure comprises 416 residues: Transcription factor caaR (416 aa).

A DNA-binding region (zn(2)-C6 fungal-type) is located at residues Cys-13–Cys-44. Disordered regions lie at residues Ala-68–Ala-90 and Gln-130–Asn-150. Residues Gln-130–Arg-141 are compositionally biased toward pro residues. Helical transmembrane passes span Val-249–Leu-269 and Ser-302–Leu-322.

The protein resides in the membrane. Its subcellular location is the nucleus. In terms of biological role, transcription factor that positively regulates the expression of the gene cluster that mediates the biosynthesis of the acyltetronic acid derivatives carlosic acid, agglomerin F and carlosic acid methyl ether. The protein is Transcription factor caaR of Aspergillus niger (strain ATCC MYA-4892 / CBS 513.88 / FGSC A1513).